A 443-amino-acid polypeptide reads, in one-letter code: Adenylyltransferase and sulfurtransferase UBA4 (443 aa).

ATP is bound by residues G83, D104, 111-115 (SNLHR), K128, and 172-173 (DT). Zn(2+) is bound by residues C214 and C217. Catalysis depends on C231, which acts as the Glycyl thioester intermediate; for adenylyltransferase activity. 2 residues coordinate Zn(2+): C292 and C295. In terms of domain architecture, Rhodanese spans 343–441 (QSKAPVLLDV…WSDIVNPKFP (99 aa)). C400 serves as the catalytic Cysteine persulfide intermediate; for sulfurtransferase activity.

It in the N-terminal section; belongs to the HesA/MoeB/ThiF family. UBA4 subfamily. Zn(2+) serves as cofactor.

The protein localises to the cytoplasm. It localises to the cytosol. Its pathway is tRNA modification; 5-methoxycarbonylmethyl-2-thiouridine-tRNA biosynthesis. Plays a central role in 2-thiolation of mcm(5)S(2)U at tRNA wobble positions of cytosolic tRNA(Lys), tRNA(Glu) and tRNA(Gln). Acts by mediating the C-terminal thiocarboxylation of sulfur carrier URM1. Its N-terminus first activates URM1 as acyl-adenylate (-COAMP), then the persulfide sulfur on the catalytic cysteine is transferred to URM1 to form thiocarboxylation (-COSH) of its C-terminus. The reaction probably involves hydrogen sulfide that is generated from the persulfide intermediate and that acts as a nucleophile towards URM1. Subsequently, a transient disulfide bond is formed. Does not use thiosulfate as sulfur donor; NFS1 probably acting as a sulfur donor for thiocarboxylation reactions. Prior mcm(5) tRNA modification by the elongator complex is required for 2-thiolation. May also be involved in protein urmylation. This is Adenylyltransferase and sulfurtransferase UBA4 from Scheffersomyces stipitis (strain ATCC 58785 / CBS 6054 / NBRC 10063 / NRRL Y-11545) (Yeast).